Consider the following 704-residue polypeptide: Histone-lysine N-methyltransferase, H3 lysine-9 specific SUVH1 (704 aa).

Disordered regions lie at residues 1 to 21 (MEQG…TRVL) and 68 to 176 (PFVA…QAEG). Polar residues-rich tracts occupy residues 80-90 (ESSQQTPSGVP) and 109-121 (SFRT…GNSG). Residues 159-170 (GKKRGRPKKPRR) are compositionally biased toward basic residues. Residues 265-412 (GNAPGIEVGD…CNVFKYKLLR (148 aa)) form the YDG domain. The Pre-SET domain maps to 487–548 (PSCHCVGGCQ…NCRNRMSQGG (62 aa)). Positions 489, 491, 495, 502, 504, 530, 534, 536, and 540 each coordinate Zn(2+). One can recognise an SET domain in the interval 551–681 (ARLEVFKTKN…PMQELTFDYG (131 aa)). S-adenosyl-L-methionine contacts are provided by residues 561-563 (RGW), D593, Y595, R635, and 638-639 (NH). C641, C692, C694, and C699 together coordinate Zn(2+). The Post-SET domain occupies 688-704 (RRKKCLCGSLNCRGYFY).

Belongs to the class V-like SAM-binding methyltransferase superfamily. Histone-lysine methyltransferase family. Suvar3-9 subfamily. Interacts with LHP1. Expressed in roots, stems, leaves and flowers.

It localises to the nucleus. The protein resides in the chromosome. The catalysed reaction is N(6)-methyl-L-lysyl(27)-[histone H3] + S-adenosyl-L-methionine = N(6),N(6)-dimethyl-L-lysyl(27)-[histone H3] + S-adenosyl-L-homocysteine + H(+). It catalyses the reaction L-lysyl(9)-[histone H3] + 2 S-adenosyl-L-methionine = N(6),N(6)-dimethyl-L-lysyl(9)-[histone H3] + 2 S-adenosyl-L-homocysteine + 2 H(+). The enzyme catalyses L-lysyl(27)-[histone H3] + S-adenosyl-L-methionine = N(6)-methyl-L-lysyl(27)-[histone H3] + S-adenosyl-L-homocysteine + H(+). Histone methyltransferase. Methylates in vitro both 'Lys-9' and 'Lys-27' of histone H3. Required for in vivo dimethylation of 'Lys-9'. H3 'Lys-9' methylation represents a specific tag for epigenetic control for plant development and transcriptional repression. The sequence is that of Histone-lysine N-methyltransferase, H3 lysine-9 specific SUVH1 (SUVH1) from Nicotiana tabacum (Common tobacco).